Reading from the N-terminus, the 569-residue chain is Proline--tRNA ligase (569 aa).

This sequence belongs to the class-II aminoacyl-tRNA synthetase family. ProS type 1 subfamily. Homodimer.

It localises to the cytoplasm. It carries out the reaction tRNA(Pro) + L-proline + ATP = L-prolyl-tRNA(Pro) + AMP + diphosphate. Its function is as follows. Catalyzes the attachment of proline to tRNA(Pro) in a two-step reaction: proline is first activated by ATP to form Pro-AMP and then transferred to the acceptor end of tRNA(Pro). As ProRS can inadvertently accommodate and process non-cognate amino acids such as alanine and cysteine, to avoid such errors it has two additional distinct editing activities against alanine. One activity is designated as 'pretransfer' editing and involves the tRNA(Pro)-independent hydrolysis of activated Ala-AMP. The other activity is designated 'posttransfer' editing and involves deacylation of mischarged Ala-tRNA(Pro). The misacylated Cys-tRNA(Pro) is not edited by ProRS. In Legionella pneumophila subsp. pneumophila (strain Philadelphia 1 / ATCC 33152 / DSM 7513), this protein is Proline--tRNA ligase.